A 448-amino-acid chain; its full sequence is N-succinylarginine dihydrolase (448 aa).

Substrate is bound by residues Gly-19 to Ser-28, Asn-110, and His-137 to Arg-138. Glu-174 is an active-site residue. Arg-214 contacts substrate. The active site involves His-250. Residues Asp-252 and Asn-365 each coordinate substrate. Cys-371 serves as the catalytic Nucleophile.

The protein belongs to the succinylarginine dihydrolase family. As to quaternary structure, homodimer.

It carries out the reaction N(2)-succinyl-L-arginine + 2 H2O + 2 H(+) = N(2)-succinyl-L-ornithine + 2 NH4(+) + CO2. It participates in amino-acid degradation; L-arginine degradation via AST pathway; L-glutamate and succinate from L-arginine: step 2/5. In terms of biological role, catalyzes the hydrolysis of N(2)-succinylarginine into N(2)-succinylornithine, ammonia and CO(2). The chain is N-succinylarginine dihydrolase from Pseudomonas syringae pv. tomato (strain ATCC BAA-871 / DC3000).